Reading from the N-terminus, the 441-residue chain is Glutamate--tRNA ligase 2 (441 aa).

The 'HIGH' region motif lies at 8-18; the sequence is PSPTGYIHVGN. A 'KMSKS' region motif is present at residues 239–243; it reads ALSKR. K242 serves as a coordination point for ATP.

The protein belongs to the class-I aminoacyl-tRNA synthetase family. Glutamate--tRNA ligase type 1 subfamily. As to quaternary structure, monomer.

It localises to the cytoplasm. The catalysed reaction is tRNA(Glu) + L-glutamate + ATP = L-glutamyl-tRNA(Glu) + AMP + diphosphate. Its function is as follows. Catalyzes the attachment of glutamate to tRNA(Glu) in a two-step reaction: glutamate is first activated by ATP to form Glu-AMP and then transferred to the acceptor end of tRNA(Glu). In Ruegeria sp. (strain TM1040) (Silicibacter sp.), this protein is Glutamate--tRNA ligase 2.